We begin with the raw amino-acid sequence, 339 residues long: tRNA N6-adenosine threonylcarbamoyltransferase (339 aa).

Positions 117 and 121 each coordinate Fe cation. Substrate is bound by residues 140-144 (VVSGG), aspartate 173, glycine 186, and asparagine 279. Aspartate 307 contacts Fe cation.

The protein belongs to the KAE1 / TsaD family. Requires Fe(2+) as cofactor.

The protein resides in the cytoplasm. The enzyme catalyses L-threonylcarbamoyladenylate + adenosine(37) in tRNA = N(6)-L-threonylcarbamoyladenosine(37) in tRNA + AMP + H(+). Required for the formation of a threonylcarbamoyl group on adenosine at position 37 (t(6)A37) in tRNAs that read codons beginning with adenine. Is involved in the transfer of the threonylcarbamoyl moiety of threonylcarbamoyl-AMP (TC-AMP) to the N6 group of A37, together with TsaE and TsaB. TsaD likely plays a direct catalytic role in this reaction. In Syntrophomonas wolfei subsp. wolfei (strain DSM 2245B / Goettingen), this protein is tRNA N6-adenosine threonylcarbamoyltransferase.